An 82-amino-acid chain; its full sequence is ATP synthase subunit c, chloroplastic (82 aa).

The next 2 membrane-spanning stretches (helical) occupy residues 3 to 23 (PLIAAASVVAAGLAVGLASIG) and 57 to 77 (LAFMEALTIYGLVVALALLFA).

Belongs to the ATPase C chain family. F-type ATPases have 2 components, F(1) - the catalytic core - and F(0) - the membrane proton channel. F(1) has five subunits: alpha(3), beta(3), gamma(1), delta(1), epsilon(1). F(0) has four main subunits: a(1), b(1), b'(1) and c(10-14). The alpha and beta chains form an alternating ring which encloses part of the gamma chain. F(1) is attached to F(0) by a central stalk formed by the gamma and epsilon chains, while a peripheral stalk is formed by the delta, b and b' chains.

The protein resides in the plastid. Its subcellular location is the chloroplast thylakoid membrane. Its function is as follows. F(1)F(0) ATP synthase produces ATP from ADP in the presence of a proton or sodium gradient. F-type ATPases consist of two structural domains, F(1) containing the extramembraneous catalytic core and F(0) containing the membrane proton channel, linked together by a central stalk and a peripheral stalk. During catalysis, ATP synthesis in the catalytic domain of F(1) is coupled via a rotary mechanism of the central stalk subunits to proton translocation. Functionally, key component of the F(0) channel; it plays a direct role in translocation across the membrane. A homomeric c-ring of between 10-14 subunits forms the central stalk rotor element with the F(1) delta and epsilon subunits. The sequence is that of ATP synthase subunit c, chloroplastic from Nephroselmis olivacea (Green alga).